We begin with the raw amino-acid sequence, 64 residues long: Large ribosomal subunit protein bL33 (64 aa).

The disordered stretch occupies residues 19–40; sequence TSTDPKRSNGVSRYTTEKNRRN.

Belongs to the bacterial ribosomal protein bL33 family.

This Prochlorococcus marinus (strain MIT 9215) protein is Large ribosomal subunit protein bL33.